The chain runs to 366 residues: MQQIIISGSVAFLVSIFLTPILIRYFTNRQMGQEIREEGLQSHLRKRGTPTMGGIAIIAGITIGYLVTNIYSYFAGYGSFTASGLLVLGLMLGLGATGFADDFIKLYKERNLGLNKTAKLISQLAIALVFGLLVLRFPDENGLTPASTHLSFIRDIDTIDIAFGGGVLGTIVFLIFIYVVVSAWSNAVNITDGLDGLAAGATAFVMGAYTLIAFWQFRNSCDTAVEAGCYTVRDPLDIAVLAAGGLGATLGFLWWNAAPAKIFMGDTGSLALGGLVAGISVVSRTELLMVIIGALFVIEVASVAIQIAVFKTRGKRVFRMAPIHHHFEAVGWAETTVVVRFWLIAIMAVIAGMAVFYGDWLTLAEV.

Transmembrane regions (helical) follow at residues 3-23 (QIIISGSVAFLVSIFLTPILI), 55-75 (IAIIAGITIGYLVTNIYSYFA), 80-100 (FTASGLLVLGLMLGLGATGFA), 118-138 (AKLISQLAIALVFGLLVLRFP), 161-181 (IAFGGGVLGTIVFLIFIYVVV), 197-217 (LAAGATAFVMGAYTLIAFWQF), 238-258 (IAVLAAGGLGATLGFLWWNAA), 262-282 (IFMGDTGSLALGGLVAGISVV), 290-310 (VIIGALFVIEVASVAIQIAVF), and 341-361 (FWLIAIMAVIAGMAVFYGDWL).

This sequence belongs to the glycosyltransferase 4 family. MraY subfamily. It depends on Mg(2+) as a cofactor.

It is found in the cell membrane. The catalysed reaction is UDP-N-acetyl-alpha-D-muramoyl-L-alanyl-gamma-D-glutamyl-meso-2,6-diaminopimeloyl-D-alanyl-D-alanine + di-trans,octa-cis-undecaprenyl phosphate = di-trans,octa-cis-undecaprenyl diphospho-N-acetyl-alpha-D-muramoyl-L-alanyl-D-glutamyl-meso-2,6-diaminopimeloyl-D-alanyl-D-alanine + UMP. It participates in cell wall biogenesis; peptidoglycan biosynthesis. Its function is as follows. Catalyzes the initial step of the lipid cycle reactions in the biosynthesis of the cell wall peptidoglycan: transfers peptidoglycan precursor phospho-MurNAc-pentapeptide from UDP-MurNAc-pentapeptide onto the lipid carrier undecaprenyl phosphate, yielding undecaprenyl-pyrophosphoryl-MurNAc-pentapeptide, known as lipid I. In Corynebacterium efficiens (strain DSM 44549 / YS-314 / AJ 12310 / JCM 11189 / NBRC 100395), this protein is Phospho-N-acetylmuramoyl-pentapeptide-transferase.